The sequence spans 246 residues: Pyridoxine 5'-phosphate synthase (246 aa).

Position 12 (N12) interacts with 3-amino-2-oxopropyl phosphate. Residue D14–H15 participates in 1-deoxy-D-xylulose 5-phosphate binding. A 3-amino-2-oxopropyl phosphate-binding site is contributed by R23. The active-site Proton acceptor is H48. 1-deoxy-D-xylulose 5-phosphate-binding residues include R50 and H55. Residue E75 is the Proton acceptor of the active site. T105 provides a ligand contact to 1-deoxy-D-xylulose 5-phosphate. Catalysis depends on H196, which acts as the Proton donor. 3-amino-2-oxopropyl phosphate contacts are provided by residues G197 and G218–H219.

Belongs to the PNP synthase family. As to quaternary structure, homooctamer; tetramer of dimers.

It localises to the cytoplasm. It catalyses the reaction 3-amino-2-oxopropyl phosphate + 1-deoxy-D-xylulose 5-phosphate = pyridoxine 5'-phosphate + phosphate + 2 H2O + H(+). It participates in cofactor biosynthesis; pyridoxine 5'-phosphate biosynthesis; pyridoxine 5'-phosphate from D-erythrose 4-phosphate: step 5/5. Functionally, catalyzes the complicated ring closure reaction between the two acyclic compounds 1-deoxy-D-xylulose-5-phosphate (DXP) and 3-amino-2-oxopropyl phosphate (1-amino-acetone-3-phosphate or AAP) to form pyridoxine 5'-phosphate (PNP) and inorganic phosphate. This Pseudomonas putida (strain GB-1) protein is Pyridoxine 5'-phosphate synthase.